A 315-amino-acid chain; its full sequence is Methionyl-tRNA formyltransferase (315 aa).

Serine 113–proline 116 serves as a coordination point for (6S)-5,6,7,8-tetrahydrofolate.

Belongs to the Fmt family.

The enzyme catalyses L-methionyl-tRNA(fMet) + (6R)-10-formyltetrahydrofolate = N-formyl-L-methionyl-tRNA(fMet) + (6S)-5,6,7,8-tetrahydrofolate + H(+). Its function is as follows. Attaches a formyl group to the free amino group of methionyl-tRNA(fMet). The formyl group appears to play a dual role in the initiator identity of N-formylmethionyl-tRNA by promoting its recognition by IF2 and preventing the misappropriation of this tRNA by the elongation apparatus. The polypeptide is Methionyl-tRNA formyltransferase (Vibrio parahaemolyticus serotype O3:K6 (strain RIMD 2210633)).